Reading from the N-terminus, the 207-residue chain is Putative 3-methyladenine DNA glycosylase (207 aa).

It belongs to the DNA glycosylase MPG family.

The chain is Putative 3-methyladenine DNA glycosylase from Burkholderia orbicola (strain MC0-3).